We begin with the raw amino-acid sequence, 404 residues long: Protein ARK2N (404 aa).

2 stretches are compositionally biased toward basic and acidic residues: residues 1-12 (MKMEEAVGKVEE) and 23-32 (SEQETAKEED). Disordered stretches follow at residues 1–50 (MKME…ADST) and 63–255 (RRDS…TNSD). Position 66 is a phosphoserine (serine 66). At serine 67 the chain carries Phosphoserine; by AMPK. The span at 87–121 (SDSSNHCMLSPSSSGHLADSDTLSSAEENEPSQAE) shows a compositional bias: polar residues. Serine 143, serine 145, and serine 147 each carry phosphoserine. The segment covering 169–187 (AKVKGHRSQKHKERIRLLR) has biased composition (basic residues). Positions 175-200 (RSQKHKERIRLLRQKREAAARKKYNL) form a coiled coil. Residues 202–226 (QDSSTSDSDLTCDSSTSSSDDDEEV) form a required for interaction with CSNK2B region. Residues 203–219 (DSSTSDSDLTCDSSTSS) show a composition bias toward low complexity. Phosphoserine occurs at positions 327, 328, and 330. Arginine 347 bears the Omega-N-methylarginine mark. Residue lysine 358 forms a Glycyl lysine isopeptide (Lys-Gly) (interchain with G-Cter in SUMO2) linkage.

Interacts with CSNK2B (via KSSR). Interacts with JUN; the interaction is mediated by CSNK2B. Phosphorylated at Ser-67 by AMPK. In skeletal muscle, phosphorylation is induced by exercise and seems to increase muscle contractile function. In terms of tissue distribution, expressed in skeletal muscle.

It is found in the nucleus. Functionally, AMPK substrate important for exercise capacity and skeletal muscle function. Required for normal contraction-induced signaling. In terms of biological role, (Microbial infection) Upon Epstein-Barr virus (EBV) infection, suppresses viral BZLF1 expression and subsequent EBV reactivation by interacting with JUN and inhibiting its transcriptional activator activity on BZLF1 Z promoter. The sequence is that of Protein ARK2N from Homo sapiens (Human).